The following is a 439-amino-acid chain: Chaperone SurA (439 aa).

The N-terminal stretch at 1-27 (MRRISSRLSLVLFAALSCATALFPAHA) is a signal peptide. PpiC domains are found at residues 180-281 (GEEF…KLLD) and 293-391 (LEQT…QVEA).

The protein localises to the periplasm. The catalysed reaction is [protein]-peptidylproline (omega=180) = [protein]-peptidylproline (omega=0). Its function is as follows. Chaperone involved in the correct folding and assembly of outer membrane proteins. Recognizes specific patterns of aromatic residues and the orientation of their side chains, which are found more frequently in integral outer membrane proteins. May act in both early periplasmic and late outer membrane-associated steps of protein maturation. The chain is Chaperone SurA from Aromatoleum aromaticum (strain DSM 19018 / LMG 30748 / EbN1) (Azoarcus sp. (strain EbN1)).